The following is a 410-amino-acid chain: MENHLGENHRRCTLQKRNVTRELKKGKHTMYALKRVKKIYIRVHEITQIDNQTYQCLEREQNFCENLARMCERTYTEEKPYRCDMCEKTFIQSSDLISHQRIHNYEKPYKCSKCEKSFWHHLALSGHQRTHAGKKFYTCDICGKNFGQSSDLLVHQRSHTGEKPYLCNECDKCFSRSTNLIRHRRTHTGEKPFKCLECEKAFSGKSDLISHQRTHTGERPYKCNKCEKSYRHRSAFIVHKRVHTGEKPYKCGACEKCFGQKSDLIVHQRVHTGEKPYKCLECMRSFTRSANLIRHQATHTHTFKCLEYEKSFNCSSDFIVHQRIHMEEKPHQWSMCESDFLLGMDFVAQQKMRAQTEELHYKYSVCDKTFHHSSALLQHQTVHIDDEYICNMSEKGLDLSSHASETSRVS.

8 C2H2-type zinc fingers span residues 81–103 (YRCDMCEKTFIQSSDLISHQRIH), 109–131 (YKCSKCEKSFWHHLALSGHQRTH), 137–159 (YTCDICGKNFGQSSDLLVHQRSH), 165–187 (YLCNECDKCFSRSTNLIRHRRTH), 193–215 (FKCLECEKAFSGKSDLISHQRTH), 221–243 (YKCNKCEKSYRHRSAFIVHKRVH), 249–271 (YKCGACEKCFGQKSDLIVHQRVH), and 277–299 (YKCLECMRSFTRSANLIRHQATH). The C2H2-type 9; degenerate zinc-finger motif lies at 303 to 325 (FKCLEYEKSFNCSSDFIVHQRIH). The segment at 361 to 383 (YKYSVCDKTFHHSSALLQHQTVH) adopts a C2H2-type 10; degenerate zinc-finger fold. Ser-400 is modified (phosphoserine).

This sequence belongs to the krueppel C2H2-type zinc-finger protein family. As to quaternary structure, interacts with POU5F1.

It localises to the nucleus. It is found in the cytoplasm. Its function is as follows. Transcriptional activator. Important for maintenance of pluripotency in embryonic stem cells. Binds directly to the POU5F1 distal enhancer and the NANOG proximal promoter, and enhances expression of both genes. Can also bind to numerous other gene promoters and regulates expression of many other pluripotency factors, either directly or indirectly. Promotes inhibition of MAPK signaling during embryonic stem cell differentiation. This is Zinc finger protein 322 (Znf322) from Mus musculus (Mouse).